The primary structure comprises 823 residues: Dimethyl sulfoxide/trimethylamine N-oxide reductase (823 aa).

A signal peptide (tat-type signal) is located at residues 1 to 42 (MTKFSGNELRAELYRRAFLSYSVAPGALGMFGRSLLAKGARA). Residues 156–160 (YGWKS), tryptophan 158, serine 189, 232–233 (KT), 262–263 (ID), 283–285 (QTD), 364–365 (WS), arginine 368, asparagine 476, histidine 480, 500–501 (HD), arginine 523, aspartate 553, 685–686 (HP), 691–693 (HSQ), asparagine 779, and 796–797 (GQ) contribute to the Mo-bis(molybdopterin guanine dinucleotide) site.

In terms of assembly, homodimer. Mo-bis(molybdopterin guanine dinucleotide) is required as a cofactor. Post-translationally, predicted to be exported by the Tat system. The position of the signal peptide cleavage has been experimentally proven.

The protein localises to the periplasm. The catalysed reaction is dimethyl sulfide + a menaquinone + H2O = dimethyl sulfoxide + a menaquinol. It carries out the reaction trimethylamine + 2 Fe(III)-[cytochrome c] + H2O = trimethylamine N-oxide + 2 Fe(II)-[cytochrome c] + 3 H(+). In terms of biological role, catalyzes the reduction of dimethyl sulfoxide (DMSO) and trimethylamine N-oxide (TMAO) to dimethyl sulfide (DMS) and trimethylamine, respectively. The terminal DMSO reductase can also use various sulfoxides and N-oxide compounds as terminal electron acceptor in addition to DMSO and TMAO. This chain is Dimethyl sulfoxide/trimethylamine N-oxide reductase (dorA), found in Rhodobacter capsulatus (Rhodopseudomonas capsulata).